A 383-amino-acid chain; its full sequence is Anhydro-N-acetylmuramic acid kinase (383 aa).

An ATP-binding site is contributed by 9–16 (GTSLDGID).

It belongs to the anhydro-N-acetylmuramic acid kinase family.

It catalyses the reaction 1,6-anhydro-N-acetyl-beta-muramate + ATP + H2O = N-acetyl-D-muramate 6-phosphate + ADP + H(+). It participates in amino-sugar metabolism; 1,6-anhydro-N-acetylmuramate degradation. The protein operates within cell wall biogenesis; peptidoglycan recycling. Its function is as follows. Catalyzes the specific phosphorylation of 1,6-anhydro-N-acetylmuramic acid (anhMurNAc) with the simultaneous cleavage of the 1,6-anhydro ring, generating MurNAc-6-P. Is required for the utilization of anhMurNAc either imported from the medium or derived from its own cell wall murein, and thus plays a role in cell wall recycling. This Bacillus cereus (strain ATCC 10987 / NRS 248) protein is Anhydro-N-acetylmuramic acid kinase.